A 353-amino-acid chain; its full sequence is MPKRIVYNISSDFQLKSLLGEGAYGVVCSATHKPTGEIVAIKKIEPFDKPLFALRTLREIKILKHFKHENIITIFNIQRPDSFENFNEVYIIQELMQTDLHRVISTQMLSDDHIQYFIYQTLRAVKVLHGSNVIHRDLKPSNLLINSNCDLKVCDFGLARIIDESAADNSEPTGQQSGMTEYVATRWYRAPEVMLTSAKYSRAMDVWSCGCILAELFLRRPIFPGRDYRHQLLLIFGIIGTPHSDNDLRCIESPRAREYIKSLPMYPAAPLEKMFPRVNPKGIDLLQRMLVFDPAKRITAKEALEHPYLQTYHDPNDEPEGEPIPPSFFEFDHYKEALTTKDLKKLIWNEIFS.

One can recognise a Protein kinase domain in the interval 13–309 (FQLKSLLGEG…AKEALEHPYL (297 aa)). Residues 19 to 27 (LGEGAYGVV) and K42 contribute to the ATP site. Catalysis depends on D137, which acts as the Proton acceptor. At T180 the chain carries Phosphothreonine. The TXY motif lies at 180–182 (TEY). Phosphotyrosine is present on Y182. K345 participates in a covalent cross-link: Glycyl lysine isopeptide (Lys-Gly) (interchain with G-Cter in ubiquitin).

It belongs to the protein kinase superfamily. CMGC Ser/Thr protein kinase family. MAP kinase subfamily. In the nucleus, FUS3 forms a complex with DIG1, DIG2 and STE12. The interaction of FUS3 with STE12 depends on the presence of both DIG1 and DIG2. STE12 is lost from FUS3/DIG1/DIG2 complex after pheromone treatment. During its activation and phosphorylation, FUS3 forms a membrane-associated complex with the scaffold protein STE5, the MAPKK STE7, the MAPKKK STE11, and the G-protein beta subunit GBB/STE4; interacting directly with STE7 and STE5. It depends on Mg(2+) as a cofactor. Post-translationally, dually phosphorylated on Thr-180 and Tyr-182 by STE7 in response to pheromone induction, which activates the enzyme. Activated FUS3 initiates a feedback signal, down-regulating phosphorylation of both, FUS3 and KSS1.

It localises to the nucleus. The protein localises to the cytoplasm. It is found in the periplasm. The enzyme catalyses L-seryl-[protein] + ATP = O-phospho-L-seryl-[protein] + ADP + H(+). It catalyses the reaction L-threonyl-[protein] + ATP = O-phospho-L-threonyl-[protein] + ADP + H(+). With respect to regulation, activated by tyrosine and threonine phosphorylation after pheromone treatment. Its function is as follows. Together with closely related KSS1, FUS3 is the final kinase in the signal transduction cascade regulating activation/repression of the mating and filamentation pathways, induced by pheromone and nitrogen/carbon limitation, respectively. Phosphorylated FUS3 activates the mating but suppresses the filamentation pathway, whereas activated KSS1 activates both pathways. Pheromone-activated FUS3 functions by inhibiting the binding of the transcriptional activator STE12 to filamentation specific genes while inducing its binding to and activity at mating specific genes. Non-activated FUS3 has a repressive effect on STE12 transcriptional activity. KSS1 can partially compensate for the lack of FUS3 but mating efficiency is reduced and the filamentation program is partially activated upon pheromone signaling. FUS3 phosphorylates STE7, STE5, FAR1, DIG1, DIG2 and STE12. In Saccharomyces cerevisiae (strain ATCC 204508 / S288c) (Baker's yeast), this protein is Mitogen-activated protein kinase FUS3 (FUS3).